Consider the following 61-residue polypeptide: Large ribosomal subunit protein bL28 (61 aa).

This sequence belongs to the bacterial ribosomal protein bL28 family.

This chain is Large ribosomal subunit protein bL28, found in Geobacillus kaustophilus (strain HTA426).